The sequence spans 874 residues: Alanine--tRNA ligase (874 aa).

Residues histidine 564, histidine 568, cysteine 665, and histidine 669 each contribute to the Zn(2+) site.

This sequence belongs to the class-II aminoacyl-tRNA synthetase family. Zn(2+) serves as cofactor.

The protein localises to the cytoplasm. It carries out the reaction tRNA(Ala) + L-alanine + ATP = L-alanyl-tRNA(Ala) + AMP + diphosphate. Functionally, catalyzes the attachment of alanine to tRNA(Ala) in a two-step reaction: alanine is first activated by ATP to form Ala-AMP and then transferred to the acceptor end of tRNA(Ala). Also edits incorrectly charged Ser-tRNA(Ala) and Gly-tRNA(Ala) via its editing domain. This Burkholderia thailandensis (strain ATCC 700388 / DSM 13276 / CCUG 48851 / CIP 106301 / E264) protein is Alanine--tRNA ligase.